The chain runs to 301 residues: uncharacterized protein (301 aa).

3 residues coordinate a divalent metal cation: glutamate 146, glutamate 148, and aspartate 177.

It belongs to the FAH family.

This is an uncharacterized protein from Staphylococcus epidermidis (strain ATCC 12228 / FDA PCI 1200).